The primary structure comprises 123 residues: MSTNRRILTKKTENISNFINNYHSDVINEVEESITNNRVVVVGMAYNPHVSKVNKVLGEQGVQFKYLEYGSYFSMWSQRLSIKMFTGFPTYPQVFVDGTLIGGCDDTIKELNEGTLFNDLKKK.

One can recognise a Glutaredoxin domain in the interval 27–123 (INEVEESITN…GTLFNDLKKK (97 aa)).

Belongs to the glutaredoxin family.

This is Glutaredoxin-like protein (grxB) from Dictyostelium discoideum (Social amoeba).